Here is a 254-residue protein sequence, read N- to C-terminus: Hydrolase tropI (254 aa).

Residues Cys141, Asp187, and His219 contribute to the active site.

The protein belongs to the dienelactone hydrolase family.

It participates in secondary metabolite biosynthesis. Functionally, hydrolase; part of the gene cluster that mediates the biosynthesis of the tropolone class of fungal maleic anhydrides. The pathway begins with the synthesis of 3-methylorcinaldehyde by the non-reducing polyketide synthase (PKS) tropA. 3-methylorcinaldehyde is the substrate for the FAD-dependent monooxygenase tropB to yield a dearomatized hydroxycyclohexadione. The 2-oxoglutarate-dependent dioxygenase tropC then performs the oxidative ring expansion to provide the first tropolone metabolite stipitaldehyde. Trop D converts stipitaldehyde into stipitacetal which is in turn converted to stipitalide by the short-chain dehydrogenase/reductase tropE. The next steps involve tropF, tropG, tropH, tropI and tropJ to form successive tropolone maleic anhydrides including stipitaldehydic, stipitatonic and stipitatic acids. In Talaromyces stipitatus (strain ATCC 10500 / CBS 375.48 / QM 6759 / NRRL 1006) (Penicillium stipitatum), this protein is Hydrolase tropI.